The sequence spans 644 residues: Acetolactate synthase 1, chloroplastic (644 aa).

Residues 1–43 (MATTAAAAAAALSAAATAKTGRKNHQRHHVLPARGRVGAAAVR) constitute a chloroplast transit peptide. The tract at residues 47 to 67 (VSPVTPPSPAPPATPLRPWGP) is disordered. Pro residues predominate over residues 50 to 61 (VTPPSPAPPATP). Glutamate 118 is a binding site for thiamine diphosphate. Cysteine 138 and cysteine 284 are joined by a disulfide. FAD contacts are provided by residues arginine 220, 326 to 347 (HGTV…FGVR), and 369 to 388 (DIDP…ICAD). A thiamine pyrophosphate binding region spans residues 461-541 (QHQMWAAQYY…VKVMVLNNQH (81 aa)). Mg(2+) is bound by residues aspartate 512 and asparagine 539.

Belongs to the TPP enzyme family. The cofactor is Mg(2+). It depends on thiamine diphosphate as a cofactor.

Its subcellular location is the plastid. The protein localises to the chloroplast. It catalyses the reaction 2 pyruvate + H(+) = (2S)-2-acetolactate + CO2. The protein operates within amino-acid biosynthesis; L-isoleucine biosynthesis; L-isoleucine from 2-oxobutanoate: step 1/4. It functions in the pathway amino-acid biosynthesis; L-valine biosynthesis; L-valine from pyruvate: step 1/4. The sequence is that of Acetolactate synthase 1, chloroplastic (ALS1) from Oryza sativa subsp. japonica (Rice).